The following is a 293-amino-acid chain: MATH domain and coiled-coil domain-containing protein At3g58400 (293 aa).

The MATH domain maps to 3-126 (RSRSQNLITE…NGELKIVAEI (124 aa)). The stretch at 227–285 (KLDWLENKLYEVAQKKEDDEAGETRLREMEEKLKDLKLKCSKMEALVEEEKAKVSAAKA) forms a coiled coil.

The protein is MATH domain and coiled-coil domain-containing protein At3g58400 of Arabidopsis thaliana (Mouse-ear cress).